The following is an 809-amino-acid chain: DNA replication helicase (809 aa).

72–79 (GTAGAGKS) contributes to the ATP binding site.

It belongs to the herpesviridae helicase family. As to quaternary structure, associates with the primase and the primase-associated factor to form the helicase-primase complex.

The protein resides in the host nucleus. In terms of biological role, component of the helicase/primase complex. Unwinds the DNA at the replication forks and generates single-stranded DNA for both leading and lagging strand synthesis. The primase synthesizes short RNA primers on the lagging strand that the polymerase elongates using dNTPs. Possesses helicase-like motifs and therefore may act as the helicase subunit of the complex. The protein is DNA replication helicase of Epstein-Barr virus (strain B95-8) (HHV-4).